Reading from the N-terminus, the 198-residue chain is Dephospho-CoA kinase (198 aa).

The region spanning 4–198 (FLGLTGGIAS…LSDLLQEIGR (195 aa)) is the DPCK domain. 12–17 (ASGKST) is an ATP binding site.

This sequence belongs to the CoaE family.

Its subcellular location is the cytoplasm. The catalysed reaction is 3'-dephospho-CoA + ATP = ADP + CoA + H(+). The protein operates within cofactor biosynthesis; coenzyme A biosynthesis; CoA from (R)-pantothenate: step 5/5. Its function is as follows. Catalyzes the phosphorylation of the 3'-hydroxyl group of dephosphocoenzyme A to form coenzyme A. This Lactobacillus johnsonii (strain CNCM I-12250 / La1 / NCC 533) protein is Dephospho-CoA kinase.